We begin with the raw amino-acid sequence, 248 residues long: Ribonuclease 3 (248 aa).

One can recognise an RNase III domain in the interval 15–142 (LKAFFKQYHV…MIAALYLDLG (128 aa)). Position 55 (glutamate 55) interacts with Mg(2+). Residue aspartate 59 is part of the active site. Residues aspartate 128 and glutamate 131 each coordinate Mg(2+). Glutamate 131 is an active-site residue. The DRBM domain occupies 169–240 (DYKTELQEFL…ARDALQKLAT (72 aa)).

This sequence belongs to the ribonuclease III family. Homodimer. Mg(2+) is required as a cofactor.

The protein localises to the cytoplasm. It carries out the reaction Endonucleolytic cleavage to 5'-phosphomonoester.. Digests double-stranded RNA. Involved in the processing of primary rRNA transcript to yield the immediate precursors to the large and small rRNAs (23S and 16S). Processes some mRNAs, and tRNAs when they are encoded in the rRNA operon. Processes pre-crRNA and tracrRNA of type II CRISPR loci if present in the organism. The protein is Ribonuclease 3 of Spiroplasma citri.